The sequence spans 409 residues: MAGVCDMAPNFLSPSEDQALGLALGREVALNCTAWVFSRPQCPQPSVQWLKDGLALGNGSHFSLHEDFWVSANFSEIVSSVLVLNLTNAEDYGTFTCSVWNVSSHSFTLWRAGPAGHVAAVLASLLVLVVLLLVALLYVKCRLNMLLWYQDTYGEVEMNDGKLYDAYVSYSDCPEDRKFVNFILKPQLERRRGYKLFLEDRDLLPRAEPSADLLVNLSRCRRLIVVLSDAFLSRPWCSQSFREGLCRLLELTRRPIFITFEGQRREPIHPALRLLRQHRHLVTLVLWKPGSVTPSSDFWKELQLALPRKVQYRPVEGDPQTRLQDDKDPMLIVRGRAAQGRGMESELDPDPEGDLGVRGPVFGEPPTPLQETRICIGESHGSEMDVSDLGSRNYSARTDFYCLVSEDDV.

Residues 1-117 are Extracellular-facing; the sequence is MAGVCDMAPN…TLWRAGPAGH (117 aa). The 100-residue stretch at 9–108 folds into the Ig-like C2-type domain; sequence PNFLSPSEDQ…VWNVSSHSFT (100 aa). 5 N-linked (GlcNAc...) asparagine glycosylation sites follow: Asn31, Asn58, Asn73, Asn85, and Asn101. Residues Cys32 and Cys97 are joined by a disulfide bond. Residues 118-138 form a helical; Signal-anchor for type III membrane protein membrane-spanning segment; it reads VAAVLASLLVLVVLLLVALLY. Topologically, residues 139–409 are cytoplasmic; it reads VKCRLNMLLW…FYCLVSEDDV (271 aa). In terms of domain architecture, TIR spans 162-306; that stretch reads KLYDAYVSYS…DFWKELQLAL (145 aa). Phosphoserine is present on Ser382.

The protein belongs to the interleukin-1 receptor family. As to quaternary structure, interacts with IL1R1, IRAK1, TLR4, TLR5, TLR9 and TRAF6. Upon IL-1 stimulation found in a complex at least composed of IL1R1, SIGIRR, MYD88, IRAK1 and TRAF6. Upon stimulation with LPC found in a complex at least composed of TLR4, SIG1IR, MYD88, IRAK1 and TRAF6. Interacts with PALM3. As to expression, expressed at high levels in kidney, and at moderate levels in colon, small intestine, lung, spleen and liver. Not expressed in brain and muscle. Expressed at high levels in epithelial cells, at moderate levels in splenocytes, and at low or undetectable levels in fibroblasts or endothelial cells. Expressed in mucosal and dendritic cells.

Its subcellular location is the membrane. Its function is as follows. Acts as a negative regulator of the Toll-like and IL-1R receptor signaling pathways. Attenuates the recruitment of receptor-proximal signaling components to the TLR4 receptor, probably through an TIR-TIR domain interaction with TLR4. Through its extracellular domain interferes with the heterodimerization of Il1R1 and IL1RAP. The sequence is that of Single Ig IL-1-related receptor (Sigirr) from Mus musculus (Mouse).